The chain runs to 291 residues: MELRSRRSAEAYLVTPEEPAKNKSERSIESNERVGTREAKSENTSVFSPAYSDTATTDSSKKVDDNEYYNFTSHFMPSLKNTRELENTILNLIQRIKEGDDETLVSEKDLILSVLNRSLASTSHWKLQAQLSELRATSEGRYAVETNLLKKEVEFLKNKTPKTNESASSAELRPLLERPLKRKLSLPGLAQRPLSTGARLEGGYGGVSPNSWKTKVPKLPLPASRPSLNLSPQKVPTGTDKVEEDTKIDTLELVENNKPHPRMRRRSDNPATNEYVRVFHLEKKEPKSRKK.

Disordered stretches follow at residues methionine 1 to lysine 62, proline 220 to valine 242, and glutamate 255 to lysine 291. Positions glutamate 18 to serine 41 are enriched in basic and acidic residues. Composition is skewed to polar residues over residues glutamate 42–aspartate 58 and proline 226–proline 236. At serine 267 the chain carries Phosphoserine.

The protein localises to the cytoplasm. The protein resides in the nucleus. This is an uncharacterized protein from Saccharomyces cerevisiae (strain ATCC 204508 / S288c) (Baker's yeast).